The sequence spans 694 residues: Elongation factor G 1 (694 aa).

The tr-type G domain maps to 5 to 280 (SRYRNIGIFA…AVVDYLPDPT (276 aa)). Residues 14–21 (AHVDAGKT), 78–82 (DTPGH), and 132–135 (NKLD) contribute to the GTP site.

This sequence belongs to the TRAFAC class translation factor GTPase superfamily. Classic translation factor GTPase family. EF-G/EF-2 subfamily.

It is found in the cytoplasm. Catalyzes the GTP-dependent ribosomal translocation step during translation elongation. During this step, the ribosome changes from the pre-translocational (PRE) to the post-translocational (POST) state as the newly formed A-site-bound peptidyl-tRNA and P-site-bound deacylated tRNA move to the P and E sites, respectively. Catalyzes the coordinated movement of the two tRNA molecules, the mRNA and conformational changes in the ribosome. In Methylococcus capsulatus (strain ATCC 33009 / NCIMB 11132 / Bath), this protein is Elongation factor G 1.